Reading from the N-terminus, the 1755-residue chain is Transposon Ty1-JR1 Gag-Pol polyprotein (1755 aa).

The span at 1 to 16 shows a compositional bias: low complexity; sequence MESQQLSQHSHISHGS. Disordered regions lie at residues 1–93, 126–173, and 352–421; these read MESQ…MMTQ, PQSQ…RPPP, and GSRN…SKST. Polar residues-rich tracts occupy residues 48–60 and 127–152; these read TKAN…TPAS and QSQF…GNTF. Residues 153–165 show a composition bias toward low complexity; sequence TDSSSADSDMTST. The RNA-binding stretch occupies residues 299 to 401; sequence NNGIHINNKV…NSKSKTARAH (103 aa). Residues 402-418 show a composition bias toward low complexity; the sequence is NVSTSNNSPSTDNDSIS. Ser416 carries the post-translational modification Phosphoserine. Asp461 acts as the For protease activity; shared with dimeric partner in catalysis. Positions 583-640 are integrase-type zinc finger-like; it reads NVHTSESTRKYPYPFIHRMLAHANAQTIRYSLKNNTITYFNESDVDWSSAIDYQCPDC. The Integrase catalytic domain maps to 660 to 835; sequence NSYEPFQYLH…AGLDISTLLP (176 aa). Residues Asp671 and Asp736 each coordinate Mg(2+). Disordered regions lie at residues 956 to 1087, 1092 to 1111, and 1130 to 1186; these read SKAV…ETEK, RSPS…NIVP, and DLPL…EDNE. Residues 960-969 show a composition bias toward low complexity; sequence SPTDSTPPST. Over residues 1005–1015 the composition is skewed to polar residues; the sequence is STPQISNIEST. Positions 1038 to 1053 are enriched in basic and acidic residues; the sequence is ESSHASKSKDFRHSDS. 2 stretches are compositionally biased toward polar residues: residues 1054–1082 and 1101–1111; these read YSEN…QISD and PENNSSHNIVP. The Bipartite nuclear localization signal motif lies at 1178–1212; sequence KKRSLEDNETEIKVSRDTWNTKNMRSLEPPRSKKR. The Reverse transcriptase Ty1/copia-type domain occupies 1338–1476; sequence NNYYITQLDI…DILGLEIKYQ (139 aa). 6 residues coordinate Mg(2+): Asp1346, Asp1427, Asp1428, Asp1610, Glu1652, and Asp1685. The region spanning 1610–1752 is the RNase H Ty1/copia-type domain; that stretch reads DASYGNQPYY…IKTFKLLTNK (143 aa).

In terms of assembly, the capsid protein forms a homotrimer, from which the VLPs are assembled. The protease is a homodimer, whose active site consists of two apposed aspartic acid residues. Post-translationally, initially, virus-like particles (VLPs) are composed of the structural unprocessed proteins Gag and Gag-Pol, and also contain the host initiator methionine tRNA (tRNA(i)-Met) which serves as a primer for minus-strand DNA synthesis, and a dimer of genomic Ty RNA. Processing of the polyproteins occurs within the particle and proceeds by an ordered pathway, called maturation. First, the protease (PR) is released by autocatalytic cleavage of the Gag-Pol polyprotein yielding capsid protein p45 and a Pol-p154 precursor protein. This cleavage is a prerequisite for subsequent processing of Pol-p154 at the remaining sites to release the mature structural and catalytic proteins. Maturation takes place prior to the RT reaction and is required to produce transposition-competent VLPs.

It is found in the cytoplasm. Its subcellular location is the nucleus. The catalysed reaction is DNA(n) + a 2'-deoxyribonucleoside 5'-triphosphate = DNA(n+1) + diphosphate. The enzyme catalyses Endonucleolytic cleavage to 5'-phosphomonoester.. Its function is as follows. Capsid protein (CA) is the structural component of the virus-like particle (VLP), forming the shell that encapsulates the retrotransposons dimeric RNA genome. The particles are assembled from trimer-clustered units and there are holes in the capsid shells that allow for the diffusion of macromolecules. CA also has nucleocapsid-like chaperone activity, promoting primer tRNA(i)-Met annealing to the multipartite primer-binding site (PBS), dimerization of Ty1 RNA and initiation of reverse transcription. The aspartyl protease (PR) mediates the proteolytic cleavages of the Gag and Gag-Pol polyproteins after assembly of the VLP. In terms of biological role, reverse transcriptase/ribonuclease H (RT) is a multifunctional enzyme that catalyzes the conversion of the retro-elements RNA genome into dsDNA within the VLP. The enzyme displays a DNA polymerase activity that can copy either DNA or RNA templates, and a ribonuclease H (RNase H) activity that cleaves the RNA strand of RNA-DNA heteroduplexes during plus-strand synthesis and hydrolyzes RNA primers. The conversion leads to a linear dsDNA copy of the retrotransposon that includes long terminal repeats (LTRs) at both ends. Functionally, integrase (IN) targets the VLP to the nucleus, where a subparticle preintegration complex (PIC) containing at least integrase and the newly synthesized dsDNA copy of the retrotransposon must transit the nuclear membrane. Once in the nucleus, integrase performs the integration of the dsDNA into the host genome. This is Transposon Ty1-JR1 Gag-Pol polyprotein (TY1B-JR1) from Saccharomyces cerevisiae (strain ATCC 204508 / S288c) (Baker's yeast).